Consider the following 91-residue polypeptide: Large ribosomal subunit protein bL31B (91 aa).

The protein belongs to the bacterial ribosomal protein bL31 family. Type B subfamily. Part of the 50S ribosomal subunit.

In Neisseria meningitidis serogroup C (strain 053442), this protein is Large ribosomal subunit protein bL31B.